The primary structure comprises 407 residues: Phosphopentomutase (407 aa).

6 residues coordinate Mn(2+): D10, D306, H311, D347, H348, and H359.

This sequence belongs to the phosphopentomutase family. Mn(2+) serves as cofactor.

It is found in the cytoplasm. The enzyme catalyses 2-deoxy-alpha-D-ribose 1-phosphate = 2-deoxy-D-ribose 5-phosphate. It catalyses the reaction alpha-D-ribose 1-phosphate = D-ribose 5-phosphate. It functions in the pathway carbohydrate degradation; 2-deoxy-D-ribose 1-phosphate degradation; D-glyceraldehyde 3-phosphate and acetaldehyde from 2-deoxy-alpha-D-ribose 1-phosphate: step 1/2. In terms of biological role, isomerase that catalyzes the conversion of deoxy-ribose 1-phosphate (dRib-1-P) and ribose 1-phosphate (Rib-1-P) to deoxy-ribose 5-phosphate (dRib-5-P) and ribose 5-phosphate (Rib-5-P), respectively. In Shigella boydii serotype 18 (strain CDC 3083-94 / BS512), this protein is Phosphopentomutase.